The sequence spans 1644 residues: Terminal uridylyltransferase 4 (1644 aa).

2 disordered regions span residues 30–60 (SNQTLKPRNDKSEIGTSSLNRNSSKKTKQND) and 75–277 (AASV…EMDY). Ser-102 carries the post-translational modification Phosphoserine. Residues 108–123 (KGSSQTKLEKTPSLQT) are compositionally biased toward polar residues. At Ser-131 the chain carries Phosphoserine. Composition is skewed to polar residues over residues 146–156 (AEATTEKALNS) and 163–174 (TPTSQMKLQKTP). Ser-176 carries the post-translational modification Phosphoserine. Composition is skewed to polar residues over residues 194–209 (QTESQQTGKKLTSSFV) and 226–242 (LENSSLSQKQQTQTDNI). Over residues 258–272 (DLSKMKSEESNKENS) the composition is skewed to basic and acidic residues. Residues 273-353 (SEMDYLENAT…KEKRHKKNIL (81 aa)) are required for interaction with LIN28A and pre-let-7 RNA. Cys-326, Cys-329, His-342, and His-348 together coordinate Zn(2+). Residues 603-623 (IADENKAKADEPKDDTKKTET) are compositionally biased toward basic and acidic residues. Positions 603–640 (IADENKAKADEPKDDTKKTETDNQSNAAKAKHGKSPLT) are disordered. The PAP-associated 1 domain occupies 649-698 (LGQLWLELLKFYTLDFALEEYVICVRIQDILTRENKNWPKRRIAIEDPFS). 2 disordered regions span residues 733–759 (KGGNKSTMDPKKKEKGKLSSKKPVKSD) and 812–841 (HGQDSSSLSTASGGSDLKQKSAEKQGDLTP). The segment covering 745-755 (KEKGKLSSKKP) has biased composition (basic residues). Over residues 815–827 (DSSSLSTASGGSD) the composition is skewed to low complexity. The segment covering 828–837 (LKQKSAEKQG) has biased composition (basic and acidic residues). The tract at residues 918 to 1634 (DKFILTSGKP…CATRRCRERC (717 aa)) is sufficient for monouridylation activity. The CCHC-type 1 zinc finger occupies 930 to 947 (IVCSICKKDGHSKNDCPE). UTP contacts are provided by residues 1015 to 1018 (SSKN), 1025 to 1028 (SDLD), Asn-1098, Lys-1120, 1138 to 1142 (SYAYI), and His-1254. Mg(2+)-binding residues include Asp-1026 and Asp-1028. Residues 1201 to 1254 (SLGELWLGLLRFYTEEFDFKEYVISIRQKKLLTTFEKQWTSKCIAIEDPFDLNH) enclose the PAP-associated 2 domain. The CCHC-type 2 zinc-finger motif lies at 1310-1327 (RCCRVCGKIGHYMKDCPK). The tract at residues 1329–1350 (KRLKKKDSEEEKEGNEEEKDSR) is disordered. The CCHC-type 3 zinc-finger motif lies at 1358–1375 (LRCFICGDAGHVRRECPE). A compositionally biased stretch (low complexity) spans 1402–1427 (AGSAQQQSDQSIRTRQSSECSDSPSY). Residues 1402-1483 (AGSAQQQSDQ…LYNFPQSPPA (82 aa)) are disordered. Residues 1428–1450 (SPQPQPFPQNSPQPSALPPPPSQ) show a composition bias toward pro residues. A compositionally biased stretch (low complexity) spans 1451-1473 (PGSQPKLGPPQQGGQPPHQVQMP). Arg-1624 carries the omega-N-methylarginine modification.

It belongs to the DNA polymerase type-B-like family. As to quaternary structure, interacts with LIN28A in the presence of pre-let-7 RNA. Interacts with T2BP. Interacts with MOV10; the interaction is RNA-dependent. It depends on Mg(2+) as a cofactor. Mn(2+) is required as a cofactor. Ubiquitously expressed.

Its subcellular location is the nucleus. It localises to the cytoplasm. The protein localises to the cytoplasmic ribonucleoprotein granule. It carries out the reaction RNA(n) + UTP = RNA(n)-3'-uridine ribonucleotide + diphosphate. Uridylyltransferase that mediates the terminal uridylation of mRNAs with short (less than 25 nucleotides) poly(A) tails, hence facilitating global mRNA decay. Essential for both oocyte maturation and fertility. Through 3' terminal uridylation of mRNA, sculpts, with TUT7, the maternal transcriptome by eliminating transcripts during oocyte growth. Involved in microRNA (miRNA)-induced gene silencing through uridylation of deadenylated miRNA targets. Also functions as an integral regulator of microRNA biogenesiS using 3 different uridylation mechanisms. Acts as a suppressor of miRNA biogenesis by mediating the terminal uridylation of some miRNA precursors, including that of let-7 (pre-let-7), miR107, miR-143 and miR-200c. Uridylated miRNAs are not processed by Dicer and undergo degradation. Degradation of pre-let-7 contributes to the maintenance of embryonic stem (ES) cell pluripotency. Also catalyzes the 3' uridylation of miR-26A, a miRNA that targets IL6 transcript. This abrogates the silencing of IL6 transcript, hence promoting cytokine expression. In the absence of LIN28A, TUT7 and TUT4 monouridylate group II pre-miRNAs, which includes most of pre-let7 members, that shapes an optimal 3' end overhang for efficient processing. Add oligo-U tails to truncated pre-miRNAS with a 5' overhang which may promote rapid degradation of non-functional pre-miRNA species. May also suppress Toll-like receptor-induced NF-kappa-B activation via binding to T2BP. Does not play a role in replication-dependent histone mRNA degradation. Due to functional redundancy between TUT4 and TUT7, the identification of the specific role of each of these proteins is difficult. TUT4 and TUT7 restrict retrotransposition of long interspersed element-1 (LINE-1) in cooperation with MOV10 counteracting the RNA chaperonne activity of L1RE1. TUT7 uridylates LINE-1 mRNAs in the cytoplasm which inhibits initiation of reverse transcription once in the nucleus, whereas uridylation by TUT4 destabilizes mRNAs in cytoplasmic ribonucleoprotein granules. The chain is Terminal uridylyltransferase 4 from Mus musculus (Mouse).